We begin with the raw amino-acid sequence, 160 residues long: uncharacterized protein (160 aa).

An N-acetyltransferase domain is found at 5-160 (ISLSFYKPEH…GEQLILHHFL (156 aa)).

This is an uncharacterized protein from Bacillus subtilis (strain 168).